A 1162-amino-acid chain; its full sequence is Carbamoyl phosphate synthase large chain (1162 aa).

The interval 1–456 is carboxyphosphate synthetic domain; the sequence is MPKRTDIKSI…SLQKALRGLE (456 aa). Positions 129, 222, 228, 229, 261, 263, 268, 294, 295, 296, 338, and 352 each coordinate ATP. The 196-residue stretch at 186–381 folds into the ATP-grasp 1 domain; the sequence is ETEWQLGEVE…IAKVAAKLAV (196 aa). 3 residues coordinate Mg(2+): Q338, E352, and N354. The Mn(2+) site is built by Q338, E352, and N354. Residues 457 to 613 are oligomerization domain; sequence TGLTGFDEIA…PFVGQPRSEA (157 aa). Positions 614-1025 are carbamoyl phosphate synthetic domain; that stretch reads EVSDRKKVVI…AFAKAQLGAG (412 aa). In terms of domain architecture, ATP-grasp 2 spans 742–954; it reads QKLLIKLDLN…IAKVAARIMA (213 aa). ATP is bound by residues R778, T838, L840, E845, G870, I871, H872, S873, Q913, and E925. Mg(2+) is bound by residues Q913, E925, and N927. Residues Q913, E925, and N927 each coordinate Mn(2+). The 137-residue stretch at 1026–1162 folds into the MGS-like domain; it reads VELPREGTVF…VRPLQDYFRS (137 aa). Residues 1026-1162 form an allosteric domain region; it reads VELPREGTVF…VRPLQDYFRS (137 aa).

This sequence belongs to the CarB family. Composed of two chains; the small (or glutamine) chain promotes the hydrolysis of glutamine to ammonia, which is used by the large (or ammonia) chain to synthesize carbamoyl phosphate. Tetramer of heterodimers (alpha,beta)4. The cofactor is Mg(2+). It depends on Mn(2+) as a cofactor.

It carries out the reaction hydrogencarbonate + L-glutamine + 2 ATP + H2O = carbamoyl phosphate + L-glutamate + 2 ADP + phosphate + 2 H(+). The catalysed reaction is hydrogencarbonate + NH4(+) + 2 ATP = carbamoyl phosphate + 2 ADP + phosphate + 2 H(+). It functions in the pathway amino-acid biosynthesis; L-arginine biosynthesis; carbamoyl phosphate from bicarbonate: step 1/1. It participates in pyrimidine metabolism; UMP biosynthesis via de novo pathway; (S)-dihydroorotate from bicarbonate: step 1/3. Its function is as follows. Large subunit of the glutamine-dependent carbamoyl phosphate synthetase (CPSase). CPSase catalyzes the formation of carbamoyl phosphate from the ammonia moiety of glutamine, carbonate, and phosphate donated by ATP, constituting the first step of 2 biosynthetic pathways, one leading to arginine and/or urea and the other to pyrimidine nucleotides. The large subunit (synthetase) binds the substrates ammonia (free or transferred from glutamine from the small subunit), hydrogencarbonate and ATP and carries out an ATP-coupled ligase reaction, activating hydrogencarbonate by forming carboxy phosphate which reacts with ammonia to form carbamoyl phosphate. The protein is Carbamoyl phosphate synthase large chain of Brucella suis biovar 1 (strain 1330).